The sequence spans 138 residues: Cysteine desulfuration protein SufE (138 aa).

C51 functions as the Cysteine persulfide intermediate in the catalytic mechanism.

It belongs to the SufE family. In terms of assembly, homodimer. Interacts with SufS.

It is found in the cytoplasm. Its pathway is cofactor biosynthesis; iron-sulfur cluster biosynthesis. Participates in cysteine desulfuration mediated by SufS. Cysteine desulfuration mobilizes sulfur from L-cysteine to yield L-alanine and constitutes an essential step in sulfur metabolism for biosynthesis of a variety of sulfur-containing biomolecules. Functions as a sulfur acceptor for SufS, by mediating the direct transfer of the sulfur atom from the S-sulfanylcysteine of SufS, an intermediate product of cysteine desulfuration process. This chain is Cysteine desulfuration protein SufE, found in Shigella sonnei (strain Ss046).